A 423-amino-acid chain; its full sequence is Glutamate-1-semialdehyde 2,1-aminomutase (423 aa).

Lys258 carries the N6-(pyridoxal phosphate)lysine modification.

The protein belongs to the class-III pyridoxal-phosphate-dependent aminotransferase family. HemL subfamily. Pyridoxal 5'-phosphate serves as cofactor.

Its subcellular location is the cytoplasm. It catalyses the reaction (S)-4-amino-5-oxopentanoate = 5-aminolevulinate. It functions in the pathway porphyrin-containing compound metabolism; protoporphyrin-IX biosynthesis; 5-aminolevulinate from L-glutamyl-tRNA(Glu): step 2/2. This Pyrobaculum aerophilum (strain ATCC 51768 / DSM 7523 / JCM 9630 / CIP 104966 / NBRC 100827 / IM2) protein is Glutamate-1-semialdehyde 2,1-aminomutase.